Consider the following 232-residue polypeptide: Orotidine 5'-phosphate decarboxylase (232 aa).

Substrate is bound by residues Asp11, Lys33, 60 to 69 (DLKFHDIPHT), Thr119, Arg180, Gln189, Gly209, and Arg210. Residue Lys62 is the Proton donor of the active site.

This sequence belongs to the OMP decarboxylase family. Type 1 subfamily. As to quaternary structure, homodimer.

The catalysed reaction is orotidine 5'-phosphate + H(+) = UMP + CO2. Its pathway is pyrimidine metabolism; UMP biosynthesis via de novo pathway; UMP from orotate: step 2/2. Its function is as follows. Catalyzes the decarboxylation of orotidine 5'-monophosphate (OMP) to uridine 5'-monophosphate (UMP). In Nitrosococcus oceani (strain ATCC 19707 / BCRC 17464 / JCM 30415 / NCIMB 11848 / C-107), this protein is Orotidine 5'-phosphate decarboxylase.